The following is a 523-amino-acid chain: 2-isopropylmalate synthase (523 aa).

One can recognise a Pyruvate carboxyltransferase domain in the interval 5–267 (VIIFDTTLRD…HTNINHHEIW (263 aa)). Mn(2+)-binding residues include Asp14, His202, His204, and Asn238. The tract at residues 392–523 (RLDYFNVQSG…QNKENNKETV (132 aa)) is regulatory domain.

The protein belongs to the alpha-IPM synthase/homocitrate synthase family. LeuA type 1 subfamily. In terms of assembly, homodimer. Requires Mn(2+) as cofactor.

The protein resides in the cytoplasm. It catalyses the reaction 3-methyl-2-oxobutanoate + acetyl-CoA + H2O = (2S)-2-isopropylmalate + CoA + H(+). It functions in the pathway amino-acid biosynthesis; L-leucine biosynthesis; L-leucine from 3-methyl-2-oxobutanoate: step 1/4. Its function is as follows. Catalyzes the condensation of the acetyl group of acetyl-CoA with 3-methyl-2-oxobutanoate (2-ketoisovalerate) to form 3-carboxy-3-hydroxy-4-methylpentanoate (2-isopropylmalate). In Klebsiella pneumoniae subsp. pneumoniae (strain ATCC 700721 / MGH 78578), this protein is 2-isopropylmalate synthase.